Reading from the N-terminus, the 400-residue chain is MSDIISIKDIDLAKKKIFIRCDFNVPQDDFLNITDDRRIRSAIPTIRYCLDNGCSVILASHLGRPKEISSKYSLEPVSKRLARLLDKEIIMAKDIIGEDAKTKAMNLKAGEILLLENLRFEKGETKNDENLAKELASMVQVYINDAFGVCHRAHSSVEAITKFFDEKHKGAGFLLQKEIDFASNLIKHPARPFVAVVGGSKVSGKLQALTNLLPKVDKLIIGGGMAFTFLKALGYDIGNSLLEEELLEEANKILTKGKNLGVKIYLPVDVVAAPACSQDAPMKFVPVQEIPNGWMGLDIGPASVRLFKEVISDAQTIWWNGPMGVFEIDKFSKGSIKMSHYISEGHATSVVGGGDTADVVARAGDADEMTFISTGGGASLELIEGKELPGVKALRSKENE.

Residues 22–24 (DFN), arginine 38, 61–64 (HLGR), arginine 119, and arginine 152 each bind substrate. Residues lysine 205, glycine 296, glutamate 327, and 353-356 (GGDT) contribute to the ATP site.

It belongs to the phosphoglycerate kinase family. As to quaternary structure, monomer.

It localises to the cytoplasm. It carries out the reaction (2R)-3-phosphoglycerate + ATP = (2R)-3-phospho-glyceroyl phosphate + ADP. Its pathway is carbohydrate degradation; glycolysis; pyruvate from D-glyceraldehyde 3-phosphate: step 2/5. This is Phosphoglycerate kinase from Campylobacter jejuni subsp. doylei (strain ATCC BAA-1458 / RM4099 / 269.97).